Consider the following 429-residue polypeptide: Glutamate-1-semialdehyde 2,1-aminomutase 2 (429 aa).

Lysine 268 bears the N6-(pyridoxal phosphate)lysine mark.

This sequence belongs to the class-III pyridoxal-phosphate-dependent aminotransferase family. HemL subfamily. In terms of assembly, homodimer. Pyridoxal 5'-phosphate is required as a cofactor.

It is found in the cytoplasm. The catalysed reaction is (S)-4-amino-5-oxopentanoate = 5-aminolevulinate. The protein operates within porphyrin-containing compound metabolism; protoporphyrin-IX biosynthesis; 5-aminolevulinate from L-glutamyl-tRNA(Glu): step 2/2. This chain is Glutamate-1-semialdehyde 2,1-aminomutase 2, found in Halalkalibacterium halodurans (strain ATCC BAA-125 / DSM 18197 / FERM 7344 / JCM 9153 / C-125) (Bacillus halodurans).